The following is a 152-amino-acid chain: Deoxyuridine 5'-triphosphate nucleotidohydrolase (152 aa).

Residues 71–73, Asn84, 88–90, and Met98 each bind substrate; these read RSG and LID.

This sequence belongs to the dUTPase family. Requires Mg(2+) as cofactor.

The enzyme catalyses dUTP + H2O = dUMP + diphosphate + H(+). It functions in the pathway pyrimidine metabolism; dUMP biosynthesis; dUMP from dCTP (dUTP route): step 2/2. In terms of biological role, this enzyme is involved in nucleotide metabolism: it produces dUMP, the immediate precursor of thymidine nucleotides and it decreases the intracellular concentration of dUTP so that uracil cannot be incorporated into DNA. This chain is Deoxyuridine 5'-triphosphate nucleotidohydrolase, found in Shewanella baltica (strain OS185).